Here is a 485-residue protein sequence, read N- to C-terminus: NADH-quinone oxidoreductase subunit N (485 aa).

A run of 14 helical transmembrane segments spans residues 8–28, 35–55, 75–95, 105–125, 127–147, 159–179, 203–223, 235–255, 271–291, 297–317, 326–346, 374–394, 407–426, and 449–469; these read LIAL…MLCI, FVNA…LYFV, FYTG…YPWL, FYLL…ANHL, SLFI…GYAF, YMLL…LIYA, LLAG…LVPF, PAPV…GAVM, IVLG…AVSQ, LLGY…IAVQ, VGVY…VVSL, AVMT…GFFG, LWWL…YYYL, and ALTA…FFGL.

The protein belongs to the complex I subunit 2 family. In terms of assembly, NDH-1 is composed of 13 different subunits. Subunits NuoA, H, J, K, L, M, N constitute the membrane sector of the complex.

Its subcellular location is the cell inner membrane. It catalyses the reaction a quinone + NADH + 5 H(+)(in) = a quinol + NAD(+) + 4 H(+)(out). Functionally, NDH-1 shuttles electrons from NADH, via FMN and iron-sulfur (Fe-S) centers, to quinones in the respiratory chain. The immediate electron acceptor for the enzyme in this species is believed to be ubiquinone. Couples the redox reaction to proton translocation (for every two electrons transferred, four hydrogen ions are translocated across the cytoplasmic membrane), and thus conserves the redox energy in a proton gradient. This chain is NADH-quinone oxidoreductase subunit N, found in Pectobacterium carotovorum subsp. carotovorum (strain PC1).